A 557-amino-acid chain; its full sequence is Glutathione hydrolase proenzyme (557 aa).

Positions 1 to 24 (MQPVLFRTLSLGVAIAAASSSAFA) are cleaved as a signal peptide. Arg94 provides a ligand contact to L-glutamate. Catalysis depends on Thr364, which acts as the Nucleophile. Residues Thr382, Asn384, Glu403, Asp406, 435–436 (SS), and 456–457 (GG) each bind L-glutamate.

This sequence belongs to the gamma-glutamyltransferase family. In terms of assembly, this enzyme consists of two polypeptide chains, which are synthesized in precursor form from a single polypeptide. Post-translationally, cleaved by autocatalysis into a large and a small subunit.

It localises to the periplasm. The catalysed reaction is an N-terminal (5-L-glutamyl)-[peptide] + an alpha-amino acid = 5-L-glutamyl amino acid + an N-terminal L-alpha-aminoacyl-[peptide]. The enzyme catalyses glutathione + H2O = L-cysteinylglycine + L-glutamate. It carries out the reaction an S-substituted glutathione + H2O = an S-substituted L-cysteinylglycine + L-glutamate. It functions in the pathway sulfur metabolism; glutathione metabolism. The sequence is that of Glutathione hydrolase proenzyme (ggt) from Pseudomonas aeruginosa (strain ATCC 15692 / DSM 22644 / CIP 104116 / JCM 14847 / LMG 12228 / 1C / PRS 101 / PAO1).